A 148-amino-acid polypeptide reads, in one-letter code: WAP four-disulfide core domain protein 12 (148 aa).

The first 23 residues, Met-1–Ala-23, serve as a signal peptide directing secretion. One can recognise a WAP domain in the interval Gly-27–Asp-74. 4 disulfides stabilise this stretch: Cys-34/Cys-62, Cys-41/Cys-66, Cys-49/Cys-61, and Cys-55/Cys-70. A disordered region spans residues Asp-74–Ser-148.

The protein localises to the secreted. In terms of biological role, antibacterial protein. Putative acid-stable proteinase inhibitor. The chain is WAP four-disulfide core domain protein 12 (WFDC12) from Lemur catta (Ring-tailed lemur).